The following is a 467-amino-acid chain: Cysteine--tRNA ligase (467 aa).

C27 serves as a coordination point for Zn(2+). The short motif at 29–39 (ATVQGLPHIGH) is the 'HIGH' region element. Residues C209, H234, and E238 each coordinate Zn(2+). Positions 265–269 (KMSKS) match the 'KMSKS' region motif. Residue K268 participates in ATP binding.

It belongs to the class-I aminoacyl-tRNA synthetase family. Monomer. The cofactor is Zn(2+).

The protein localises to the cytoplasm. The catalysed reaction is tRNA(Cys) + L-cysteine + ATP = L-cysteinyl-tRNA(Cys) + AMP + diphosphate. This Mycolicibacterium gilvum (strain PYR-GCK) (Mycobacterium gilvum (strain PYR-GCK)) protein is Cysteine--tRNA ligase.